Reading from the N-terminus, the 1599-residue chain is MTSRQGRQAIAATAAMGVAVALALPTAAFAQSATQGKETATTTSSGTTYYVSSAHGDDANAGTSENAPWKSLTKVNDIASDLGPGDSVLLEYGSEFNDQYLHIKDTAGNADAPITISAYGDADEGKPVIASNGVKGSQWEQDYRANVGNHKNKGTVSTTLLLKDVSYITVSNLEITNDDADVYDPIDTWKWTDTPDSDGTKLDRSASRMDRTGVAGIAENGATMSNVTLDNLYIHDVDGNIYNKHMANGGIYFMAHYPMENTSAETDVWLREHVSRFDHVTIRNSTVKDVDRWGIAVGYTAYLNYIDANYGDGSIDDALIAKYGSTNVRIENNYVKGAGGDAITLMYCDRPVIEHNVGDSVSKHINTQDYTQPGSYGGRVAAGIWPWRCKDPVFQYNEMYNNLNAEHGNGDGQAWDADYGDGTLYQYNYSYGNSFASLMICNWYAVNTTFRYNISQNDRQGVFDLPSNGPGNHIYNNTVYVDADSQVLTKRSNSQSLFENNIFINATNTKKTETWNRGSQNGGQTYDNNMYVNYANKPTSDANAIEADDVSAVLAGAGSAPTSALKSGAEHARTGEKAAFDGYRPVAGSKAINAGKVVSDLNDYAVENDFLGNAVKGRPDLGAVESDVVSVTMASSKYETGTETDSGTGDKTKVIHVTFTDKNPVTVKELLSNVSADKGVDKAVYRVADAKSGKSADARSAESEPNMLDRLLSLLPGSDRNAKDDETKLADSEPVRDGDILRFSAEGTDETDEYTIRQRITWDWVADYEQGVADFDWKAQRRTSAGGEWTTISAYDGSWPNTVYDQYYGVGVNGTLAELSGDRKQTHGLLIDKPGDGLPTAMAWKAPESGTVMLSLKTFADKIAEPYLRQNADNAGKKVTLSLMRNDETLCSADDLSVYQKSSEQFAQCLAEHGSIDVQEGDWIRIVADAETGVKAPSLHISPVITYEDKAPAAPKQNVRYDVSYAATDAVVGTQSAVAAAFTADGGEADAPDGVAFAFKDGGDEGEASPVIDASTGAVTFTPAAGQYGATVTRTVVVTYADGSSDETTVTFRVAQSHAQRLNVLYPTVRGDAGTDLKRTPKFTLKADGAAASVPEGTTFALGANAPAGASVDMANGTVTLNSGVGGTVTVPVTVTFADDGASVSSTARFEVTAPAALGSSELETATVDGVNVVYAPFSADSPMTVAQLLAKVTAEPSGADKGVYRDGVRLEAGAELAENDVLRFSAKGSTVSDDYVVKSKTTWDWVNDFQVRVQGPIWYGQRQTEADGVWSDIADFDATYPNWMYETYYGPGVDYANHSLPTDRSAIHGLISDSPASAGGSAMAWKAPKAGTVKVSIREDEPYLRQDGSNGKALTLRLMHDDKVVCFADLTVSKQRSEEFANCVADKGEIAVEAGDWIRVTATSASGMNKPSAHISPVIAYMAASTPGPEPVPVDKSTLKATVEEALGLAESDYTDESWAALVAARDAAQTVLDDDAATAEQVETAQNALRDAIDGLEKKPVDPDPNPKPDPNPDPDPTPDPDPDPGPDTKPGDGSGNGSGTGNGSGSGNGSTGSGSDGATTGGKLTATGADVAGAAAMVALTAAAGIGLAAAARRRR.

A signal peptide (tat-type signal) is located at residues 1-30 (MTSRQGRQAIAATAAMGVAVALALPTAAFA). Residue H150 participates in beta-D-galactosyl-(1-&gt;3)-N-acetyl-D-glucosamine binding. 6 PbH1 repeats span residues 165 to 190 (VSYITVSNLEITNDDADVYDPIDTWK), 224 to 255 (MSNVTLDNLYIHDVDGNIYNKHMANGGIYFMA), 277 to 299 (FDHVTIRNSTVKDVDRWGIAVGY), 325 to 347 (STNVRIENNYVKGAGGDAITLMY), 348 to 388 (CDRP…WPWR), and 389 to 437 (CKDP…SFAS). The Ca(2+) site is built by D178, D179, V182, and D238. Residues K244 and H245 each contribute to the beta-D-galactosyl-(1-&gt;3)-N-acetyl-D-glucosamine site. Beta-D-galactosyl-(1-&gt;3)-N-acetyl-D-glucosamine is bound by residues W387, D411, D418, and C441. D411 (proton donor/acceptor) is an active-site residue. Catalysis depends on D418, which acts as the Nucleophile. The stretch at 469–506 (GPGNHIYNNTVYVDADSQVLTKRSNSQSLFENNIFINA) is one PbH1 7 repeat. Residues 1436–1498 (DKSTLKATVE…NALRDAIDGL (63 aa)) enclose the FIVAR domain. A compositionally biased stretch (basic and acidic residues) spans 1494 to 1509 (AIDGLEKKPVDPDPNP). Residues 1494 to 1568 (AIDGLEKKPV…DGATTGGKLT (75 aa)) form a disordered region. A compositionally biased stretch (gly residues) spans 1535 to 1558 (DGSGNGSGTGNGSGSGNGSTGSGS). Over residues 1559–1568 (DGATTGGKLT) the composition is skewed to low complexity. A helical transmembrane segment spans residues 1574-1594 (VAGAAAMVALTAAAGIGLAAA).

The protein belongs to the glycosyl hydrolase 136 (GH136) family. As to quaternary structure, homodimer. Requires Ca(2+) as cofactor. Mg(2+) serves as cofactor. Predicted to be exported by the Tat system. The position of the signal peptide cleavage has not been experimentally proven.

It localises to the cell membrane. It catalyses the reaction beta-D-Gal-(1-&gt;3)-beta-D-GlcNAc-(1-&gt;3)-beta-D-Gal-(1-&gt;4)-D-Glc + H2O = beta-D-galactosyl-(1-&gt;3)-N-acetyl-D-glucosamine + lactose. With respect to regulation, requires the chaperone LnbY for its proper folding and active expression. Is potently and competitively inhibited by LNB-PUGNAc and LNB-NHAcDNJ in vitro. Its function is as follows. Present in the infant gut, this enzyme is involved in the assimilation of type-1 human milk oligosaccharides (HMOs). It hydrolyzes via a retaining mechanism the beta-D-GlcNAc-(1-&gt;3)-beta-D-Gal linkage in lacto-N-tetraose (LNT or beta-D-Gal-(1-&gt;3)-beta-D-GlcNAc-(1-&gt;3)-beta-D-Gal-(1-&gt;4)-D-Glc), an abundant HMO unique to human breast milk, releasing lacto-N-biose (LNB or beta-D-Gal-(1-&gt;3)-D-GlcNAc) and lactose. With a much lower efficiency, is also able to cleave the same linkage in lacto-N-fucopentaose I (alpha-Fuc(1-&gt;2)-beta-D-Gal-(1-&gt;3)-beta-D-GlcNAc(1-&gt;3)-beta-D-Gal-(1-&gt;4)-D-Glc), and sialyllacto-N-tetraose a (alpha-Neu5Ac-(2-&gt;3)-beta-D-Gal-(1-&gt;3)-beta-D-GlcNAc-(1-&gt;3)-beta-D-Gal-(1-&gt;4)-D-Glc). Is a key enzymatic factor for growth and proliferation of B.longum in the gut ecosystem of breast-fed infants. This is Lacto-N-biosidase from Bifidobacterium longum subsp. longum (strain ATCC 15707 / DSM 20219 / JCM 1217 / NCTC 11818 / E194b).